Consider the following 288-residue polypeptide: Phosphatidylserine decarboxylase proenzyme (288 aa).

Catalysis depends on charge relay system; for autoendoproteolytic cleavage activity residues D89, H146, and S252. The Schiff-base intermediate with substrate; via pyruvic acid; for decarboxylase activity role is filled by S252. Position 252 is a pyruvic acid (Ser); by autocatalysis (S252).

The protein belongs to the phosphatidylserine decarboxylase family. PSD-B subfamily. Prokaryotic type I sub-subfamily. Heterodimer of a large membrane-associated beta subunit and a small pyruvoyl-containing alpha subunit. Pyruvate serves as cofactor. In terms of processing, is synthesized initially as an inactive proenzyme. Formation of the active enzyme involves a self-maturation process in which the active site pyruvoyl group is generated from an internal serine residue via an autocatalytic post-translational modification. Two non-identical subunits are generated from the proenzyme in this reaction, and the pyruvate is formed at the N-terminus of the alpha chain, which is derived from the carboxyl end of the proenzyme. The autoendoproteolytic cleavage occurs by a canonical serine protease mechanism, in which the side chain hydroxyl group of the serine supplies its oxygen atom to form the C-terminus of the beta chain, while the remainder of the serine residue undergoes an oxidative deamination to produce ammonia and the pyruvoyl prosthetic group on the alpha chain. During this reaction, the Ser that is part of the protease active site of the proenzyme becomes the pyruvoyl prosthetic group, which constitutes an essential element of the active site of the mature decarboxylase.

The protein localises to the cell membrane. It carries out the reaction a 1,2-diacyl-sn-glycero-3-phospho-L-serine + H(+) = a 1,2-diacyl-sn-glycero-3-phosphoethanolamine + CO2. It participates in phospholipid metabolism; phosphatidylethanolamine biosynthesis; phosphatidylethanolamine from CDP-diacylglycerol: step 2/2. In terms of biological role, catalyzes the formation of phosphatidylethanolamine (PtdEtn) from phosphatidylserine (PtdSer). This is Phosphatidylserine decarboxylase proenzyme from Shewanella frigidimarina (strain NCIMB 400).